We begin with the raw amino-acid sequence, 33 residues long: Dermaseptin-H6 (33 aa).

A Leucine amide modification is found at Leu-33.

In terms of tissue distribution, expressed by the skin glands.

It is found in the secreted. Has antimicrobial activity. This Pithecopus hypochondrialis (Orange-legged leaf frog) protein is Dermaseptin-H6.